The chain runs to 194 residues: Anaphase-promoting complex subunit CDC26 (194 aa).

The interval 47–194 (EPMDQSEPPR…PSSNTRSHRH (148 aa)) is disordered. 2 stretches are compositionally biased toward polar residues: residues 79–94 (GECTRTSIAPTLTSAR) and 102–112 (LTLSTPVNPVS). 2 stretches are compositionally biased toward low complexity: residues 154-166 (DESPTPSDSPESP) and 174-194 (TPGNPTSTSGGPSSNTRSHRH).

Belongs to the CDC26 family. In terms of assembly, the APC/C complex is probably composed of at least 12 subunits: apc-2, apc-10, apc-11, cdc-26, emb-1, emb-27, emb-30, mat-1, mat-2, mat-3, such-1 and gfi-3.

The protein resides in the nucleus. It participates in protein modification; protein ubiquitination. Functionally, probable component of the anaphase promoting complex/cyclosome (APC/C), a cell cycle-regulated E3 ubiquitin ligase that controls progression through mitosis and the G1 phase of the cell cycle. The APC/C complex acts by mediating ubiquitination and subsequent degradation of target proteins. Developmental role in early embryogenesis and the metaphase to anaphase transition in meiosis and mitosis. Required for embryonic anterior-posterior axis formation. The sequence is that of Anaphase-promoting complex subunit CDC26 from Caenorhabditis elegans.